The chain runs to 301 residues: GTPase Era (301 aa).

The Era-type G domain maps to 6–173; sequence KSGFVAIVGR…LEQTNANLEI (168 aa). The segment at 14 to 21 is G1; it reads GRPNVGKS. GTP is bound at residue 14-21; that stretch reads GRPNVGKS. The tract at residues 40 to 44 is G2; sequence QTTRN. Positions 61–64 are G3; sequence DTPG. Residues 61-65 and 123-126 each bind GTP; these read DTPGI and NKID. Positions 123–126 are G4; sequence NKID. Residues 152–154 are G5; the sequence is ISA. Residues 204–282 form the KH type-2 domain; the sequence is TREEVPHSVA…FLEIWVKVQK (79 aa).

This sequence belongs to the TRAFAC class TrmE-Era-EngA-EngB-Septin-like GTPase superfamily. Era GTPase family. Monomer.

It localises to the cytoplasm. The protein resides in the cell membrane. In terms of biological role, an essential GTPase that binds both GDP and GTP, with rapid nucleotide exchange. Plays a role in 16S rRNA processing and 30S ribosomal subunit biogenesis and possibly also in cell cycle regulation and energy metabolism. This is GTPase Era from Listeria monocytogenes serotype 4b (strain F2365).